Here is a 140-residue protein sequence, read N- to C-terminus: Large ribosomal subunit protein uL16 (140 aa).

It belongs to the universal ribosomal protein uL16 family. As to quaternary structure, part of the 50S ribosomal subunit.

Its function is as follows. Binds 23S rRNA and is also seen to make contacts with the A and possibly P site tRNAs. This is Large ribosomal subunit protein uL16 from Phytoplasma australiense.